Reading from the N-terminus, the 187-residue chain is Elongation factor P (187 aa).

This sequence belongs to the elongation factor P family.

Its subcellular location is the cytoplasm. The protein operates within protein biosynthesis; polypeptide chain elongation. In terms of biological role, involved in peptide bond synthesis. Stimulates efficient translation and peptide-bond synthesis on native or reconstituted 70S ribosomes in vitro. Probably functions indirectly by altering the affinity of the ribosome for aminoacyl-tRNA, thus increasing their reactivity as acceptors for peptidyl transferase. This is Elongation factor P from Helicobacter pylori (strain P12).